The sequence spans 91 residues: Small ribosomal subunit protein uS19 (91 aa).

Belongs to the universal ribosomal protein uS19 family.

In terms of biological role, protein S19 forms a complex with S13 that binds strongly to the 16S ribosomal RNA. This chain is Small ribosomal subunit protein uS19, found in Actinobacillus pleuropneumoniae serotype 7 (strain AP76).